The following is a 151-amino-acid chain: Chromophore lyase CpcS/CpeS homolog (151 aa).

This sequence belongs to the CpcS/CpeS biliprotein lyase family.

Its subcellular location is the plastid. It is found in the chloroplast. In terms of biological role, might function to covalently attach a chromophore to Cys residue(s) of phycobiliproteins. The chain is Chromophore lyase CpcS/CpeS homolog from Gracilaria tenuistipitata var. liui (Red alga).